Reading from the N-terminus, the 1140-residue chain is MSYNYVVTAQKPTAVNGCVTGHFTSAEDLNLLIAKNTRLEIYVVTAEGLRPVKEVGMYGKIAVMELFRPKGESKDLLFILTAKYNACILEYKQSGESIDIITRAHGNVQDRIGRPSETGIIGIIDPECRMIGLRLYDGLFKVIPLDRDNKELKAFNIRLEELHVIDVKFLYGCQAPTICFVYQDPQGRHVKTYEVSLREKEFNKGPWKQENVEAEASMVIAVPEPFGGAIIIGQESITYHNGDKYLAIAPPIIKQSTIVCHNRVDPNGSRYLLGDMEGRLFMLLLEKEEQMDGTVTLKDLRVELLGETSIAECLTYLDNGVVFVGSRLGDSQLVKLNVDSNEQGSYVVAMETFTNLGPIVDMCVVDLERQGQGQLVTCSGAFKEGSLRIIRNGIGIHEHASIDLPGIKGLWPLRSDPGRETDDTLVLSFVGQTRVLMLNGEEVEETELMGFVDDQQTFFCGNVAHQQLIQITSASVRLVSQEPKALVSEWKEPQGKNISVASCNSSQVVVAVGRALYYLQIHPQELRQISHTEMEHEVACLDITPLGDSNGLSPLCAIGLWTDISARILKLPSFELLHKEMLGGEIIPRSILMTTFESSHYLLCALGDGALFYFGLNIETGLLSDRKKVTLGTQPTVLRTFRSLSTTNVFACSDRPTVIYSSNHKLVFSNVNLKEVNYMCPLNSDGYPDSLALANNSTLTIGTIDEIQKLHIRTVPLYESPRKICYQEVSQCFGVLSSRIEVQDSSGGTTALRPSASTQALSSSVSSSKLFSSSTAPHETSFGEEVEVHNLLIIDQHTFEVLHAHQFLQNEYALSLVSCKLGKDPNTYFIVGTAMVYPEEAEPKQGRIVVFQYSDGKLQTVAEKEVKGAVYSMVEFNGKLLASINSTVRLYEWTTEKELRTECNHYNNIMALYLKTKGDFILVGDLMRSVLLLAYKPMEGNFEEIARDFNPNWMSAVEILDDDNFLGAENAFNLFVCQKDSAATTDEERQHLQEVGLFHLGEFVNVFCHGSLVMQNLGEASTPTQGSVLFGTVNGMIGLVTSLSESWYNLLLDMQNRLNKVIKSVGKIEHSFWRSFHTERKTEPATGFIDGDLIESFLDISRPKMQEVVANLQYDDGSGMKREATADDLIKVVEELTRIH.

S2 carries the post-translational modification N-acetylserine. The interval 2–768 is interaction with CDT1; that stretch reads SYNYVVTAQK…QALSSSVSSS (767 aa). The WD repeat beta-propeller A stretch occupies residues 13 to 356; the sequence is TAVNGCVTGH…VVAMETFTNL (344 aa). The tract at residues 391-708 is WD repeat beta-propeller B; Interaction with CUL4A; that stretch reads RNGIGIHEHA…LTIGTIDEIQ (318 aa). Positions 709 to 1043 are WD repeat beta-propeller C; it reads KLHIRTVPLY…NGMIGLVTSL (335 aa). Positions 771–1140 are interaction with CDT1 and CUL4A; that stretch reads FSSSTAPHET…KVVEELTRIH (370 aa). At K1067 the chain carries N6-acetyllysine. K1121 is covalently cross-linked (Glycyl lysine isopeptide (Lys-Gly) (interchain with G-Cter in SUMO2)). T1125 carries the phosphothreonine modification.

This sequence belongs to the DDB1 family. Component of the UV-DDB complex which includes DDB1 and DDB2; the heterodimer dimerizes to give rise to a heterotetramer when bound to damaged DNA. The UV-DDB complex interacts with monoubiquitinated histone H2A and binds to XPC via the DDB2 subunit. Component of numerous DCX (DDB1-CUL4-X-box) E3 ubiquitin-protein ligase complexes which consist of a core of DDB1, CUL4A or CUL4B and RBX1. DDB1 may recruit specific substrate targeting subunits to the DCX complex. These substrate targeting subunits are generally known as DCAF (DDB1- and CUL4-associated factor) or CDW (CUL4-DDB1-associated WD40-repeat) proteins. Interacts with AMBRA1, ATG16L1, BTRC, CRBN, DCAF1, DCAF4, DCAF5, DCAF6, DCAF7, DCAF8, DCAF9, DCAF10, DCAF11, DCAF12, DCAF15, DCAF16, DCAF17, DDA1, DET1, DTL, ERCC8, FBXW5, FBXW8, GRWD1, KATNB1, NLE1, NUP43, PAFAH1B1, PHIP, PWP1, RBBP4, RBBP5, RBBP7, COP1, SNRNP40, DCAF1, WDR5, WDR5B, WDR12, WDR26, WDR39, WDR42, WDR53, WDR59, WDR61, WSB1, WSB2, LRWD1 and WDTC1. DCX complexes may associate with the COP9 signalosome, and this inhibits the E3 ubiquitin-protein ligase activity of the complex. Interacts with NF2, TSC1 and TSC2. Interacts with AGO1 and AGO2. Associates with the E3 ligase complex containing DYRK2, EDD/UBR5, DDB1 and DCAF1 proteins (EDVP complex). Interacts directly with DYRK2. DCX(DTL) complex interacts with FBXO11; does not ubiquitinate and degradate FBXO11. Interacts with TRPC4AP. Interacts with CRY1 and CRY2. The DDB1-CUL4A complex interacts with CRY1. Component of the DCX(DCAF13) E3 ubiquitin ligase complex, at least composed of CUL4 (CUL4A or CUL4B), DDB1, DCAF13 and RBX1. Interacts with DCAF13 (via WD40 domain). Post-translationally, phosphorylated by ABL1. Ubiquitinated by CUL4A. Subsequently degraded by ubiquitin-dependent proteolysis. In terms of processing, acetylated, promoting interaction with CUL4 (CUL4A or CUL4B) and subsequent formation of DCX (DDB1-CUL4-X-box) E3 ubiquitin-protein ligase complexes. Deacetylation by SIRT7 impairs the interaction with CUL4 (CUL4A or CUL4B) and formation of DCX (DDB1-CUL4-X-box) E3 ubiquitin-protein ligase complexes. In terms of tissue distribution, widely expressed. Expressed in pregnant, lactating and involuting mammary gland. Expressed in oocytes (at protein level).

The protein localises to the cytoplasm. It localises to the nucleus. The protein operates within protein modification; protein ubiquitination. Functionally, protein, which is both involved in DNA repair and protein ubiquitination, as part of the UV-DDB complex and DCX (DDB1-CUL4-X-box) complexes, respectively. Core component of the UV-DDB complex (UV-damaged DNA-binding protein complex), a complex that recognizes UV-induced DNA damage and recruit proteins of the nucleotide excision repair pathway (the NER pathway) to initiate DNA repair. The UV-DDB complex preferentially binds to cyclobutane pyrimidine dimers (CPD), 6-4 photoproducts (6-4 PP), apurinic sites and short mismatches. Also functions as a component of numerous distinct DCX (DDB1-CUL4-X-box) E3 ubiquitin-protein ligase complexes which mediate the ubiquitination and subsequent proteasomal degradation of target proteins. The functional specificity of the DCX E3 ubiquitin-protein ligase complex is determined by the variable substrate recognition component recruited by DDB1. DCX(DDB2) (also known as DDB1-CUL4-ROC1, CUL4-DDB-ROC1 and CUL4-DDB-RBX1) may ubiquitinate histone H2A, histone H3 and histone H4 at sites of UV-induced DNA damage. The ubiquitination of histones may facilitate their removal from the nucleosome and promote subsequent DNA repair. DCX(DDB2) also ubiquitinates XPC, which may enhance DNA-binding by XPC and promote NER. DCX(DTL) plays a role in PCNA-dependent polyubiquitination of CDT1 and MDM2-dependent ubiquitination of TP53 in response to radiation-induced DNA damage and during DNA replication. DCX(ERCC8) (the CSA complex) plays a role in transcription-coupled repair (TCR). The DDB1-CUL4A-DTL E3 ligase complex regulates the circadian clock function by mediating the ubiquitination and degradation of CRY1. DDB1-mediated CRY1 degradation promotes FOXO1 protein stability and FOXO1-mediated gluconeogenesis in the liver. By acting on TET dioxygenses, essential for oocyte maintenance at the primordial follicle stage, hence essential for female fertility. Maternal factor required for proper zygotic genome activation and genome reprogramming. The polypeptide is DNA damage-binding protein 1 (Ddb1) (Mus musculus (Mouse)).